Reading from the N-terminus, the 113-residue chain is Hydrogenase maturation factor HypA (113 aa).

His-2 contacts Ni(2+). Positions 73, 76, 89, and 92 each coordinate Zn(2+).

This sequence belongs to the HypA/HybF family.

Involved in the maturation of [NiFe] hydrogenases. Required for nickel insertion into the metal center of the hydrogenase. The sequence is that of Hydrogenase maturation factor HypA from Acidithiobacillus ferrooxidans (strain ATCC 23270 / DSM 14882 / CIP 104768 / NCIMB 8455) (Ferrobacillus ferrooxidans (strain ATCC 23270)).